We begin with the raw amino-acid sequence, 301 residues long: Tyrosine recombinase XerD (301 aa).

The Core-binding (CB) domain occupies 6–89 (PLHQQLIEQF…ALKVFFHFLK (84 aa)). The 186-residue stretch at 108-293 (RLPSILSTEE…ASESIIEKFH (186 aa)) folds into the Tyr recombinase domain. Catalysis depends on residues Arg-152, Lys-174, His-245, Arg-248, and His-271. Tyr-280 acts as the O-(3'-phospho-DNA)-tyrosine intermediate in catalysis.

The protein belongs to the 'phage' integrase family. XerD subfamily. Forms a cyclic heterotetrameric complex composed of two molecules of XerC and two molecules of XerD.

The protein resides in the cytoplasm. Functionally, site-specific tyrosine recombinase, which acts by catalyzing the cutting and rejoining of the recombining DNA molecules. The XerC-XerD complex is essential to convert dimers of the bacterial chromosome into monomers to permit their segregation at cell division. It also contributes to the segregational stability of plasmids. This is Tyrosine recombinase XerD from Chlamydia muridarum (strain MoPn / Nigg).